The chain runs to 164 residues: NAD(P)H-quinone oxidoreductase subunit I, chloroplastic (164 aa).

2 4Fe-4S ferredoxin-type domains span residues 55-84 (GRIH…VDWK) and 95-124 (LNYS…MTEE). 8 residues coordinate [4Fe-4S] cluster: Cys64, Cys67, Cys70, Cys74, Cys104, Cys107, Cys110, and Cys114.

This sequence belongs to the complex I 23 kDa subunit family. NDH is composed of at least 16 different subunits, 5 of which are encoded in the nucleus. Requires [4Fe-4S] cluster as cofactor.

The protein localises to the plastid. Its subcellular location is the chloroplast thylakoid membrane. It carries out the reaction a plastoquinone + NADH + (n+1) H(+)(in) = a plastoquinol + NAD(+) + n H(+)(out). It catalyses the reaction a plastoquinone + NADPH + (n+1) H(+)(in) = a plastoquinol + NADP(+) + n H(+)(out). Its function is as follows. NDH shuttles electrons from NAD(P)H:plastoquinone, via FMN and iron-sulfur (Fe-S) centers, to quinones in the photosynthetic chain and possibly in a chloroplast respiratory chain. The immediate electron acceptor for the enzyme in this species is believed to be plastoquinone. Couples the redox reaction to proton translocation, and thus conserves the redox energy in a proton gradient. The sequence is that of NAD(P)H-quinone oxidoreductase subunit I, chloroplastic from Daucus carota (Wild carrot).